Reading from the N-terminus, the 418-residue chain is Sterigmatocystin 8-O-methyltransferase (418 aa).

A propeptide spanning residues 1 to 41 is cleaved from the precursor; the sequence is MTLPNKAALVGLAHTLSEQVKRYLVTADETKSPEDHKLCIE. Substrate is bound at residue 170–176; it reads MRSAAYF. Residues 206–225 form a substrate binding region; sequence LFDYYSTVDEVRGRRFDLGM. Residues 254–255, Asp277, 297–298, and Arg313 contribute to the S-adenosyl-L-methionine site; these read GG and DI. His317 serves as the catalytic Proton acceptor.

The protein belongs to the class I-like SAM-binding methyltransferase superfamily. Cation-independent O-methyltransferase family. COMT subfamily.

It catalyses the reaction sterigmatocystin + S-adenosyl-L-methionine = 8-O-methylsterigmatocystin + S-adenosyl-L-homocysteine + H(+). It carries out the reaction dihydrosterigmatocystin + S-adenosyl-L-methionine = 8-O-methyldihydrosterigmatocystin + S-adenosyl-L-homocysteine + H(+). It participates in mycotoxin biosynthesis; aflatoxin biosynthesis. Involved in the conversion of sterigmatocystin to O-methylsterigmatocystin (OMST) and dihydrosterigmatocystin to dihydro-o-methylsterigmatocystin in the aflatoxin biosynthesis pathway. In Aspergillus flavus (strain ATCC 200026 / FGSC A1120 / IAM 13836 / NRRL 3357 / JCM 12722 / SRRC 167), this protein is Sterigmatocystin 8-O-methyltransferase (omtA).